Reading from the N-terminus, the 168-residue chain is Secreted RxLR effector protein RXLR-C06 (168 aa).

Positions Met-1 to Ala-22 are cleaved as a signal peptide. The interval Asp-25–Ser-52 is disordered. The span at Val-32–Lys-50 shows a compositional bias: polar residues. 2 N-linked (GlcNAc...) asparagine glycosylation sites follow: Asn-37 and Asn-42. Residues Arg-46–Arg-63 carry the RxLR-dEER motif. The IQ domain maps to Tyr-78–Ser-107. A glycan (N-linked (GlcNAc...) asparagine) is linked at Asn-105.

The protein belongs to the RxLR effector family.

Its subcellular location is the secreted. The protein resides in the host Golgi apparatus. Its function is as follows. Secreted effector that suppresses pattern-triggered immunity (PTI) in plant host. In Plasmopara halstedii (Downy mildew of sunflower), this protein is Secreted RxLR effector protein RXLR-C06.